Here is a 169-residue protein sequence, read N- to C-terminus: Peptide methionine sulfoxide reductase MsrA (169 aa).

Cys-13 is a catalytic residue.

It belongs to the MsrA Met sulfoxide reductase family.

It carries out the reaction L-methionyl-[protein] + [thioredoxin]-disulfide + H2O = L-methionyl-(S)-S-oxide-[protein] + [thioredoxin]-dithiol. The catalysed reaction is [thioredoxin]-disulfide + L-methionine + H2O = L-methionine (S)-S-oxide + [thioredoxin]-dithiol. Functionally, has an important function as a repair enzyme for proteins that have been inactivated by oxidation. Catalyzes the reversible oxidation-reduction of methionine sulfoxide in proteins to methionine. The chain is Peptide methionine sulfoxide reductase MsrA from Mycolicibacterium gilvum (strain PYR-GCK) (Mycobacterium gilvum (strain PYR-GCK)).